A 533-amino-acid chain; its full sequence is Protein translocase subunit SecD (533 aa).

The next 6 membrane-spanning stretches (helical) occupy residues 8 to 28 (ALLV…TFVS), 377 to 397 (IVGG…GGVV), 400 to 420 (LALA…GFTL), 422 to 442 (LPGI…NVLI), 469 to 489 (LTIL…LQFG), and 495 to 515 (GFAV…IFVT).

Belongs to the SecD/SecF family. SecD subfamily. In terms of assembly, forms a complex with SecF. Part of the essential Sec protein translocation apparatus which comprises SecA, SecYEG and auxiliary proteins SecDF-YajC and YidC.

The protein localises to the cell inner membrane. Its function is as follows. Part of the Sec protein translocase complex. Interacts with the SecYEG preprotein conducting channel. SecDF uses the proton motive force (PMF) to complete protein translocation after the ATP-dependent function of SecA. This is Protein translocase subunit SecD from Syntrophobacter fumaroxidans (strain DSM 10017 / MPOB).